The following is a 516-amino-acid chain: Delta(24)-sterol reductase (516 aa).

Residues Met1–Gly22 form the signal peptide. Topologically, residues Leu23–Arg31 are lumenal. Residues Trp32–Val52 traverse the membrane as a helical segment. At Arg53–His516 the chain is on the cytoplasmic side. In terms of domain architecture, FAD-binding PCMH-type spans Phe58–Ala234. FAD is bound at residue Thr163–Ser175.

This sequence belongs to the FAD-binding oxidoreductase/transferase type 4 family. In terms of assembly, interacts with DHCR7; this interaction regulates DHCR7 activity. It depends on FAD as a cofactor.

It is found in the endoplasmic reticulum membrane. The protein localises to the golgi apparatus membrane. The enzyme catalyses cholesterol + NADP(+) = desmosterol + NADPH + H(+). The catalysed reaction is lanosterol + NADPH + H(+) = 24,25-dihydrolanosterol + NADP(+). It carries out the reaction 5alpha-cholest-8-en-3beta-ol + NADP(+) = zymosterol + NADPH + H(+). It functions in the pathway steroid biosynthesis; cholesterol biosynthesis. Catalyzes the reduction of the delta-24 double bond of sterol intermediates during cholesterol biosynthesis. In addition to its cholesterol-synthesizing activity, can protect cells from oxidative stress by reducing caspase 3 activity during apoptosis induced by oxidative stress. Also protects against amyloid-beta peptide-induced apoptosis. The polypeptide is Delta(24)-sterol reductase (DHCR24) (Macaca fascicularis (Crab-eating macaque)).